Here is a 139-residue protein sequence, read N- to C-terminus: 3-hydroxyacyl-[acyl-carrier-protein] dehydratase FabZ (139 aa).

The active site involves His-46.

It belongs to the thioester dehydratase family. FabZ subfamily.

Its subcellular location is the cytoplasm. It carries out the reaction a (3R)-hydroxyacyl-[ACP] = a (2E)-enoyl-[ACP] + H2O. In terms of biological role, involved in unsaturated fatty acids biosynthesis. Catalyzes the dehydration of short chain beta-hydroxyacyl-ACPs and long chain saturated and unsaturated beta-hydroxyacyl-ACPs. This chain is 3-hydroxyacyl-[acyl-carrier-protein] dehydratase FabZ, found in Petrotoga mobilis (strain DSM 10674 / SJ95).